Here is a 372-residue protein sequence, read N- to C-terminus: Chorismate synthase (372 aa).

Arg-48 contacts NADP(+). FMN-binding positions include 131–133, 243–244, Gly-288, 303–307, and Arg-329; these read RSS, NA, and KPTSS.

This sequence belongs to the chorismate synthase family. As to quaternary structure, homotetramer. FMNH2 is required as a cofactor.

The enzyme catalyses 5-O-(1-carboxyvinyl)-3-phosphoshikimate = chorismate + phosphate. Its pathway is metabolic intermediate biosynthesis; chorismate biosynthesis; chorismate from D-erythrose 4-phosphate and phosphoenolpyruvate: step 7/7. In terms of biological role, catalyzes the anti-1,4-elimination of the C-3 phosphate and the C-6 proR hydrogen from 5-enolpyruvylshikimate-3-phosphate (EPSP) to yield chorismate, which is the branch point compound that serves as the starting substrate for the three terminal pathways of aromatic amino acid biosynthesis. This reaction introduces a second double bond into the aromatic ring system. The protein is Chorismate synthase of Caulobacter vibrioides (strain ATCC 19089 / CIP 103742 / CB 15) (Caulobacter crescentus).